The sequence spans 329 residues: NAD(+) hydrolase TcpA (329 aa).

Residues 5–134 (VSISYLALEQ…ADCVRFYTVR (130 aa)) form the MPN domain. The region spanning 192–324 (FEYDVFICHA…YVVNEILRVL (133 aa)) is the TIR domain. NAD(+)-binding positions include 201–202 (AH) and S231. The active site involves E267.

The catalysed reaction is NAD(+) + H2O = ADP-D-ribose + nicotinamide + H(+). Its function is as follows. NAD(+) hydrolase (NADase) that catalyzes cleavage of NAD(+) into ADP-D-ribose (ADPR) and nicotinamide. The protein is NAD(+) hydrolase TcpA of Theionarchaea archaeon (strain DG-70-1).